Reading from the N-terminus, the 67-residue chain is uncharacterized protein (67 aa).

Helical transmembrane passes span 8–28 and 41–61; these read MWFALGSMGLMFLAVASIYLS and ISSFAYMCMLISGIIVFVVVF.

It localises to the cell membrane. This is an uncharacterized protein from Bacillus subtilis (strain 168).